The following is a 123-amino-acid chain: Large ribosomal subunit protein uL14 (123 aa).

The protein belongs to the universal ribosomal protein uL14 family. In terms of assembly, part of the 50S ribosomal subunit. Forms a cluster with proteins L3 and L19. In the 70S ribosome, L14 and L19 interact and together make contacts with the 16S rRNA in bridges B5 and B8.

Binds to 23S rRNA. Forms part of two intersubunit bridges in the 70S ribosome. In Blochmanniella pennsylvanica (strain BPEN), this protein is Large ribosomal subunit protein uL14.